Consider the following 248-residue polypeptide: Methyl-coenzyme M reductase subunit gamma (248 aa).

Residue Arg121 coordinates coenzyme M.

Belongs to the methyl-coenzyme M reductase gamma subunit family. In terms of assembly, MCR is a hexamer of two alpha, two beta, and two gamma chains, forming a dimer of heterotrimers. Coenzyme F430 serves as cofactor.

The protein resides in the cytoplasm. The enzyme catalyses coenzyme B + methyl-coenzyme M = methane + coenzyme M-coenzyme B heterodisulfide. It functions in the pathway one-carbon metabolism; methyl-coenzyme M reduction; methane from methyl-coenzyme M: step 1/1. In terms of biological role, component of the methyl-coenzyme M reductase (MCR) I that catalyzes the reductive cleavage of methyl-coenzyme M (CoM-S-CH3 or 2-(methylthio)ethanesulfonate) using coenzyme B (CoB or 7-mercaptoheptanoylthreonine phosphate) as reductant which results in the production of methane and the mixed heterodisulfide of CoB and CoM (CoM-S-S-CoB). This is the final step in methanogenesis. The polypeptide is Methyl-coenzyme M reductase subunit gamma (mcrG) (Methanosarcina barkeri (strain Fusaro / DSM 804)).